Consider the following 311-residue polypeptide: Olfactory receptor 1L4 (311 aa).

The Extracellular segment spans residues 1–26 (METKNYSSSTSGFILLGLSSNPKLQK). An N-linked (GlcNAc...) asparagine glycan is attached at N5. Residues 27-50 (PLFAIFLIMYLLTAVGNVLIILAI) traverse the membrane as a helical segment. The Cytoplasmic portion of the chain corresponds to 51 to 58 (YSDPRLHT). The chain crosses the membrane as a helical span at residues 59–80 (PMYFFLSNLSFMDICFTTVIVP). At 81–101 (KMLVNFLSETKIISYVGCLIQ) the chain is on the extracellular side. C98 and C190 are joined by a disulfide. The helical transmembrane segment at 102–121 (MYFFMAFGNTDSYLLASMAI) threads the bilayer. Residues 122–140 (DRLVAICNPLHYDVVMKPW) are Cytoplasmic-facing. Residues 141–159 (HCLLMLLGSCSISHLHSLF) form a helical membrane-spanning segment. The Extracellular portion of the chain corresponds to 160 to 197 (RVLLMSRLSFCASHIIKHFFCDTQPVLKLSCSDTSSSQ). The chain crosses the membrane as a helical span at residues 198 to 220 (MVVMTETLAVIVTPFLCTIFSYL). At 221-237 (QIIVTVLRIPSAAGKWK) the chain is on the cytoplasmic side. The chain crosses the membrane as a helical span at residues 238-260 (AFSTCGSHLTVVVLFYGSVIYVY). The Extracellular portion of the chain corresponds to 261–273 (FRPLSMYSVMKGR). Residues 274 to 293 (VATVMYTVVTPMLNPFIYSL) form a helical membrane-spanning segment. The Cytoplasmic portion of the chain corresponds to 294–311 (RNKDMKRGLKKLRHRIYS).

This sequence belongs to the G-protein coupled receptor 1 family.

Its subcellular location is the cell membrane. Its function is as follows. Odorant receptor. This is Olfactory receptor 1L4 (OR1L4) from Homo sapiens (Human).